We begin with the raw amino-acid sequence, 651 residues long: Acetyl-coenzyme A synthetase (651 aa).

Residues 191–194 (RGGK), T311, and N335 each bind CoA. ATP is bound by residues 387–389 (GEP), 411–416 (DTWWQT), D500, and R515. S523 contacts CoA. Residue R526 coordinates ATP. Mg(2+) contacts are provided by V537, H539, and V542. R584 serves as a coordination point for CoA. An N6-acetyllysine modification is found at K609.

It belongs to the ATP-dependent AMP-binding enzyme family. Mg(2+) serves as cofactor. Acetylated. Deacetylation by the SIR2-homolog deacetylase activates the enzyme.

The catalysed reaction is acetate + ATP + CoA = acetyl-CoA + AMP + diphosphate. In terms of biological role, catalyzes the conversion of acetate into acetyl-CoA (AcCoA), an essential intermediate at the junction of anabolic and catabolic pathways. AcsA undergoes a two-step reaction. In the first half reaction, AcsA combines acetate with ATP to form acetyl-adenylate (AcAMP) intermediate. In the second half reaction, it can then transfer the acetyl group from AcAMP to the sulfhydryl group of CoA, forming the product AcCoA. The sequence is that of Acetyl-coenzyme A synthetase from Pseudomonas syringae pv. syringae (strain B728a).